A 455-amino-acid chain; its full sequence is Golgi pH regulator (455 aa).

4 consecutive transmembrane segments (helical) span residues 46 to 66 (ITFAFSCTMFELIIFEILGAL), 79 to 99 (LYVILLVLIFVVPFYIGYFVV), 111 to 131 (LFACVVWFTFMYFFWKLGDPF), and 150 to 170 (VGVIGVTLMALLSGFGAVNCP). Residues asparagine 180 and asparagine 243 are each glycosylated (N-linked (GlcNAc...) asparagine). 4 helical membrane passes run 290-310 (GYFFSIYCVWKIFMATINIVF), 343-363 (ISFILVGIIIVTSIRGLLITL), 378-398 (VIVLVLAQIMGMYFVSSVLLM), and 425-445 (WFDVIFLVSALSSILFLYLAH).

It belongs to the Golgi pH regulator (TC 1.A.38) family. In terms of assembly, homotrimer.

It is found in the golgi apparatus membrane. The enzyme catalyses iodide(out) = iodide(in). The catalysed reaction is chloride(in) = chloride(out). It carries out the reaction bromide(in) = bromide(out). It catalyses the reaction fluoride(in) = fluoride(out). Voltage-gated channel that enables the transfer of anions such as iodide, chloride, bromide and fluoride which may function in counter-ion conductance and participates in Golgi acidification. This chain is Golgi pH regulator, found in Salmo salar (Atlantic salmon).